A 713-amino-acid chain; its full sequence is Pheromone-processing carboxypeptidase KEX1 (713 aa).

The N-terminal stretch at 1-22 (MMVSYKLLSLITLLFVAQCTTG) is a signal peptide. At 23–616 (LLKQDDYVVR…ESETKTHPKA (594 aa)) the chain is on the lumenal side. Residues serine 196 and aspartate 404 contribute to the active site. N-linked (GlcNAc...) asparagine glycosylation is found at asparagine 457 and asparagine 465. Residue histidine 468 is part of the active site. The disordered stretch occupies residues 500–612 (DVLISTNEPT…DDKSESETKT (113 aa)). The segment covering 512 to 522 (DIEEEELDGEK) has biased composition (acidic residues). Over residues 523-552 (EDEKDGVTEGDGEKSDTDEGKDTDKGKDEK) the composition is skewed to basic and acidic residues. Residues 553 to 601 (NDDDDDDDDDSDDDSDDDDDDDDDDDDDDDDDDDSDDDDDDDDDSDDNE) are compositionally biased toward acidic residues. The segment covering 602 to 612 (KDDKSESETKT) has biased composition (basic and acidic residues). A helical transmembrane segment spans residues 617-637 (KIALLLLLFISVFGITGSQAL). The Cytoplasmic portion of the chain corresponds to 638–713 (RQRNFQFRRA…IDESFELAEI (76 aa)). The disordered stretch occupies residues 650 to 696 (TSNSFSSSSSPNDPSNWDSNDDFDFDIENDPLPSTNNKHKAAKKKKD). Over residues 651–667 (SNSFSSSSSPNDPSNWD) the composition is skewed to low complexity. A compositionally biased stretch (acidic residues) spans 668 to 678 (SNDDFDFDIEN). Residues 686 to 695 (NKHKAAKKKK) are compositionally biased toward basic residues.

The protein belongs to the peptidase S10 family.

It localises to the golgi apparatus. Its subcellular location is the trans-Golgi network membrane. It catalyses the reaction Preferential release of a C-terminal arginine or lysine residue.. Its function is as follows. Protease with a carboxypeptidase B-like function involved in the C-terminal processing of the lysine and arginine residues from protein precursors. Promotes cell fusion and is involved in the programmed cell death. The sequence is that of Pheromone-processing carboxypeptidase KEX1 (KEX1) from Vanderwaltozyma polyspora (strain ATCC 22028 / DSM 70294 / BCRC 21397 / CBS 2163 / NBRC 10782 / NRRL Y-8283 / UCD 57-17) (Kluyveromyces polysporus).